The following is a 426-amino-acid chain: O-methyltransferase pyvH (426 aa).

S-adenosyl-L-methionine is bound by residues 258 to 259 (GG), Asp-281, 308 to 309 (DF), and Arg-323. The active-site Proton acceptor is the His-327.

Belongs to the class I-like SAM-binding methyltransferase superfamily. Cation-independent O-methyltransferase family.

It functions in the pathway secondary metabolite biosynthesis. In terms of biological role, O-methyltransferase; part of the gene cluster that mediates the biosynthesis of pyranoviolin A, a pyranonigrin analog with a C-3 methoxy group. Initially, the PKS portion of pyvA synthesizes C-10 carbon chain from 5 molecules of malonyl-CoA, which is then condensed with the thiolation (T) domain-bound glycine activated by the adenylation (A) domain. The subsequent chain release by Dieckmann condensation (DKC) could be catalyzed by the TE domain present at the C-terminus of pyvA and/or the alpha/beta hydrolase pyvD, installing the tetramic acid moiety. The FAD-dependent monooxygenase pyvC next epoxidizes one of the olefins of the polyketide part, and the epoxide ring-opening induces the dihydro-gamma-pyrone ring formation. The cytochrome P450 monooxygeanse pyvB would be responsible for the 2 consecutive reactions, in which the dihydro-gamma-pyrone is oxidized to gamma-pyrone and C-7 is hydroxylated to yield pyranonigrin F. Finally, the O-methyltransferase pyvH methylates the C-3 hydroxy group to complete the biosynthesis. The sequence is that of O-methyltransferase pyvH from Aspergillus violaceofuscus (strain CBS 115571).